The sequence spans 357 residues: Thiamine thiazole synthase, chloroplastic (357 aa).

Substrate contacts are provided by residues Ala-102, 123–124, Gly-131, and Val-196; that span reads EQ. The residue at position 233 (Cys-233) is a 2,3-didehydroalanine (Cys). Residues Asp-235, His-250, Met-304, and 314-316 contribute to the substrate site; that span reads RMG.

Belongs to the THI4 family. In terms of assembly, homooctamer. Fe cation is required as a cofactor. In terms of processing, during the catalytic reaction, a sulfide is transferred from Cys-233 to a reaction intermediate, generating a dehydroalanine residue.

The protein resides in the plastid. Its subcellular location is the chloroplast. The catalysed reaction is [ADP-thiazole synthase]-L-cysteine + glycine + NAD(+) = [ADP-thiazole synthase]-dehydroalanine + ADP-5-ethyl-4-methylthiazole-2-carboxylate + nicotinamide + 3 H2O + 2 H(+). Its function is as follows. Involved in biosynthesis of the thiamine precursor thiazole. Catalyzes the conversion of NAD and glycine to adenosine diphosphate 5-(2-hydroxyethyl)-4-methylthiazole-2-carboxylic acid (ADT), an adenylated thiazole intermediate. The reaction includes an iron-dependent sulfide transfer from a conserved cysteine residue of the protein to a thiazole intermediate. The enzyme can only undergo a single turnover, which suggests it is a suicide enzyme. May have additional roles in adaptation to various stress conditions and in DNA damage tolerance. The sequence is that of Thiamine thiazole synthase, chloroplastic from Chlamydomonas reinhardtii (Chlamydomonas smithii).